The following is a 152-amino-acid chain: MMKFQDFSSGLYVAAKFSDSTLDEIENLQRELKVPNPVPRHKIHSTICYSRVNVPYVVSTGSFEVANSGELQVWDTQDGRTLVLVLDSDYLKFRHNYARALGATHDFDDYSPHITLSYNVGPAQFSGIVQVPVILDREYKEPLKINWTEDLK.

Position 12 (Tyr-12) interacts with 3',3'-cGAMP. Tyr-12 is a binding site for 3',3'-cUAMP. Catalysis depends on residues His-44, Thr-46, His-113, and Thr-115. The 3',3'-cGAMP site is built by Glu-141 and Trp-147. 3',3'-cUAMP-binding residues include Glu-141 and Trp-147.

This sequence belongs to the anti-CBASS protein Acb1 family.

The catalysed reaction is 3',3'-cUAMP + H2O = U[3'-5']pAp[3'] + H(+). The enzyme catalyses 3',3',3'-c-tri-AMP + H2O = A[3'-5']pA[3'-5']pAp[3'] + H(+). It catalyses the reaction 3',3',3'-cAAG + H2O = G[3'-5']pA[3'-5']pAp[3'] + H(+). It carries out the reaction 3',3',3'-cAAG + H2O = A[3'-5']pG[3'-5']pAp[3'] + H(+). The catalysed reaction is 3',3'-cGAMP + H2O = G[3'-5']pAp[3'] + H(+). Its function is as follows. Counteracts the host CBASS antiviral defense system. Phosphodiesterase that enables metal-independent hydrolysis of the host cyclic di- and trinucleotide CBASS signals such as 3'3'-cGAMP, 3'3'cUA, and 3'3'3'-cAAA. Does not cleave cGG or cA4. Besides evasion of the CBASS system, might also enable evasion of the type III CRISPR systems that use cA3 signals. The chain is Anti-CBASS protein Acb1 from Salmonella phage S16 (Salmonella phage vB_SenM-S16).